The following is a 704-amino-acid chain: Glycogen [starch] synthase, liver (704 aa).

Phosphoserine occurs at positions 8 and 11. Lysine 40 is a binding site for UDP. 2 residues coordinate UDP-alpha-D-glucose: histidine 205 and arginine 211. 5 residues coordinate alpha-D-glucose 6-phosphate: histidine 291, glutamate 292, glutamine 294, histidine 297, and lysine 301. Residue arginine 331 coordinates UDP. A UDP-alpha-D-glucose-binding site is contributed by arginine 331. Histidine 501 is a binding site for alpha-D-glucose 6-phosphate. Positions 510, 512, and 513 each coordinate UDP-alpha-D-glucose. Threonine 515 is a binding site for UDP. Alpha-D-glucose 6-phosphate-binding residues include arginine 582 and arginine 586. The interval 620-704 is disordered; that stretch reads KFHLEPTSPP…KKKLHGEYKN (85 aa). Serine 627 is modified (phosphoserine). Serine 641, serine 645, serine 649, and serine 653 each carry phosphoserine; by GSK3-alpha and GSK3-beta. The span at 647–657 shows a compositional bias: low complexity; that stretch reads SGSQTSSPQSS. Serine 657 carries the phosphoserine; by CK2 modification. A compositionally biased stretch (acidic residues) spans 659–675; that stretch reads VENEGDEDERYDEEEEA. Serine 684 carries the post-translational modification Phosphoserine.

The protein belongs to the glycosyltransferase 3 family. Part of the glycogen synthase (GS)-glycogenin complex, a heterooctamer composed of a tetramer of GS and 2 dimers of glycogenin, where each GS protomer binds to one glycogenin subunit (via glycogenin C-terminus); the GS tetramer may dissociate from glycogenin dimers to continue glycogen polymerization on its own. May also form a heterooctamer complex with GYG1 (via GYG1 C-terminus). In terms of processing, primed phosphorylation at Ser-657 (site 5) by CSNK2A1 and CSNK2A2 is required for inhibitory phosphorylation at Ser-641 (site 3a), Ser-645 (site 3b), Ser-649 (site 3c) and Ser-653 (site 4) by GSK3A an GSK3B. Dephosphorylation at Ser-641 and Ser-645 by PP1 activates the enzyme. Phosphorylation at Ser-8 is not required for interaction with GYG1. Interaction with GYG1 does not regulate the phosphorylation at Ser-8 and Ser-641. As to expression, specifically expressed in liver (at protein level).

It carries out the reaction [(1-&gt;4)-alpha-D-glucosyl](n) + UDP-alpha-D-glucose = [(1-&gt;4)-alpha-D-glucosyl](n+1) + UDP + H(+). Its pathway is glycan biosynthesis; glycogen biosynthesis. Its activity is regulated as follows. Allosteric activation by glucose-6-phosphate. Phosphorylation reduces the activity towards UDP-glucose. When in the non-phosphorylated state, glycogen synthase does not require glucose-6-phosphate as an allosteric activator; when phosphorylated it does. Its function is as follows. Glycogen synthase participates in the glycogen biosynthetic process along with glycogenin and glycogen branching enzyme. Extends the primer composed of a few glucose units formed by glycogenin by adding new glucose units to it. In this context, glycogen synthase transfers the glycosyl residue from UDP-Glc to the non-reducing end of alpha-1,4-glucan. This Rattus norvegicus (Rat) protein is Glycogen [starch] synthase, liver.